A 123-amino-acid chain; its full sequence is Small ribosomal subunit protein uS12 (123 aa).

Aspartate 89 is subject to 3-methylthioaspartic acid.

Belongs to the universal ribosomal protein uS12 family. In terms of assembly, part of the 30S ribosomal subunit. Contacts proteins S8 and S17. May interact with IF1 in the 30S initiation complex.

In terms of biological role, with S4 and S5 plays an important role in translational accuracy. Interacts with and stabilizes bases of the 16S rRNA that are involved in tRNA selection in the A site and with the mRNA backbone. Located at the interface of the 30S and 50S subunits, it traverses the body of the 30S subunit contacting proteins on the other side and probably holding the rRNA structure together. The combined cluster of proteins S8, S12 and S17 appears to hold together the shoulder and platform of the 30S subunit. The protein is Small ribosomal subunit protein uS12 of Geobacter metallireducens (strain ATCC 53774 / DSM 7210 / GS-15).